Consider the following 418-residue polypeptide: UDP-N-acetylglucosamine 1-carboxyvinyltransferase 2 (418 aa).

Residue 22–23 (KN) participates in phosphoenolpyruvate binding. Arginine 92 serves as a coordination point for UDP-N-acetyl-alpha-D-glucosamine. The active-site Proton donor is the cysteine 116. Residue cysteine 116 is modified to 2-(S-cysteinyl)pyruvic acid O-phosphothioketal. UDP-N-acetyl-alpha-D-glucosamine-binding residues include aspartate 305 and isoleucine 327.

Belongs to the EPSP synthase family. MurA subfamily.

Its subcellular location is the cytoplasm. The catalysed reaction is phosphoenolpyruvate + UDP-N-acetyl-alpha-D-glucosamine = UDP-N-acetyl-3-O-(1-carboxyvinyl)-alpha-D-glucosamine + phosphate. Its pathway is cell wall biogenesis; peptidoglycan biosynthesis. Cell wall formation. Adds enolpyruvyl to UDP-N-acetylglucosamine. The chain is UDP-N-acetylglucosamine 1-carboxyvinyltransferase 2 from Mesorhizobium japonicum (strain LMG 29417 / CECT 9101 / MAFF 303099) (Mesorhizobium loti (strain MAFF 303099)).